Here is a 377-residue protein sequence, read N- to C-terminus: ATP synthase gamma chain, chloroplastic (377 aa).

Residues 1–55 (MSCSNLTMLVSSKPSLSDSSALSFRSSVSPFQLPNHNTSGPSNPSRSSSVTPVHC) constitute a chloroplast transit peptide. The segment at 30–52 (PFQLPNHNTSGPSNPSRSSSVTP) is disordered. The segment covering 37–52 (NTSGPSNPSRSSSVTP) has biased composition (low complexity). Cys143 is a catalytic residue. Cys253 and Cys259 form a disulfide bridge.

The protein belongs to the ATPase gamma chain family. F-type ATPases have 2 components, CF(1) - the catalytic core - and CF(0) - the membrane proton channel. CF(1) has five subunits: alpha(3), beta(3), gamma(1), delta(1), epsilon(1). CF(0) has four main subunits: a, b, b' and c.

The protein localises to the plastid. It is found in the chloroplast thylakoid membrane. Its function is as follows. Produces ATP from ADP in the presence of a proton gradient across the membrane. The gamma chain is believed to be important in regulating ATPase activity and the flow of protons through the CF(0) complex. The sequence is that of ATP synthase gamma chain, chloroplastic (ATPC) from Nicotiana tabacum (Common tobacco).